A 42-amino-acid polypeptide reads, in one-letter code: MNNNFTKYLSTAPVIGVLWMTFTAGFIIELNRFFPDVLYFYL.

Residues 8 to 28 (YLSTAPVIGVLWMTFTAGFII) form a helical membrane-spanning segment.

The protein belongs to the PsaJ family.

It is found in the plastid. The protein localises to the chloroplast thylakoid membrane. Its function is as follows. May help in the organization of the PsaE and PsaF subunits. The sequence is that of Photosystem I reaction center subunit IX from Pyropia yezoensis (Susabi-nori).